The sequence spans 352 residues: Ion-translocating oxidoreductase complex subunit D (352 aa).

5 helical membrane-spanning segments follow: residues 20–40, 42–62, 68–88, 89–109, and 123–143; these read IMLL…WFFG, GTLV…ALVL, PIAA…LAVS, IPPL…VIIA, and PAMI…TNWL. Thr187 is modified (FMN phosphoryl threonine). The next 5 membrane-spanning stretches (helical) occupy residues 217–237, 244–264, 267–287, 301–321, and 322–342; these read GAGW…LLAI, IPVS…LFAP, LASP…FFIL, LIFG…GGYP, and DGVA…DYYT.

It belongs to the NqrB/RnfD family. In terms of assembly, the complex is composed of six subunits: RsxA, RsxB, RsxC, RsxD, RsxE and RsxG. FMN serves as cofactor.

It localises to the cell inner membrane. Functionally, part of a membrane-bound complex that couples electron transfer with translocation of ions across the membrane. Required to maintain the reduced state of SoxR. The chain is Ion-translocating oxidoreductase complex subunit D from Escherichia fergusonii (strain ATCC 35469 / DSM 13698 / CCUG 18766 / IAM 14443 / JCM 21226 / LMG 7866 / NBRC 102419 / NCTC 12128 / CDC 0568-73).